A 96-amino-acid chain; its full sequence is MEQAPEDQGPQREPYNEWALELLEELKNEAVRHFPRLWLHGLGQHIYNTYGDTWEGVEAIIRILQQLLFIHFRIGCQHSRIGITPRRRVRDGPGRS.

Residues 1–42 (MEQAPEDQGPQREPYNEWALELLEELKNEAVRHFPRLWLHGL) form a homooligomerization region. Residues Ser79 and Ser96 each carry the phosphoserine; by host modification.

This sequence belongs to the HIV-1 VPR protein family. Homooligomer, may form homodimer. Interacts with p6-gag region of the Pr55 Gag precursor protein through a (Leu-X-X)4 motif near the C-terminus of the P6gag protein. Interacts with host UNG. May interact with host RAD23A/HHR23A. Interacts with host VPRBP/DCAF1, leading to hijack the CUL4A-RBX1-DDB1-DCAF1/VPRBP complex, mediating ubiquitination of host proteins such as TERT and ZGPAT and arrest of the cell cycle in G2 phase. Post-translationally, phosphorylated on several residues by host. These phosphorylations regulate VPR activity for the nuclear import of the HIV-1 pre-integration complex.

It is found in the virion. The protein localises to the host nucleus. The protein resides in the host extracellular space. Its function is as follows. During virus replication, may deplete host UNG protein, and incude G2-M cell cycle arrest. Acts by targeting specific host proteins for degradation by the 26S proteasome, through association with the cellular CUL4A-DDB1 E3 ligase complex by direct interaction with host VPRPB/DCAF-1. Cell cycle arrest reportedly occurs within hours of infection and is not blocked by antiviral agents, suggesting that it is initiated by the VPR carried into the virion. Additionally, VPR induces apoptosis in a cell cycle dependent manner suggesting that these two effects are mechanistically linked. Detected in the serum and cerebrospinal fluid of AIDS patient, VPR may also induce cell death to bystander cells. In terms of biological role, during virus entry, plays a role in the transport of the viral pre-integration (PIC) complex to the host nucleus. This function is crucial for viral infection of non-dividing macrophages. May act directly at the nuclear pore complex, by binding nucleoporins phenylalanine-glycine (FG)-repeat regions. This is Protein Vpr from Human immunodeficiency virus type 1 group M subtype G (isolate SE6165) (HIV-1).